Consider the following 623-residue polypeptide: Putative disease resistance protein At5g47280 (623 aa).

2 consecutive NB-ARC domains span residues Leu-2 to Ser-51 and Val-119 to Val-249. An ATP-binding site is contributed by Gly-16 to Thr-23. 4 LRR repeats span residues Ser-488–Gln-511, Ala-512–Leu-534, Arg-536–Val-558, and Thr-560–Leu-581.

This sequence belongs to the disease resistance NB-LRR family.

In terms of biological role, potential disease resistance protein. In Arabidopsis thaliana (Mouse-ear cress), this protein is Putative disease resistance protein At5g47280.